The chain runs to 615 residues: MAEKFAETTFTDPARIRNFCIIAHIDHGKSTLADRILQLSNVVDARDMRDQYLDNMDIERERGITIKAQNVRLPWIPRSGEYEGQQIVMQMIDTPGHVDFTYEVSRALEACEGAILLVDAAQGIEAQTLANLYLAMENDLEIIPVLNKIDLPAADPDKYALEIANIVGCEPEDVLRVSGKTGMGVPELLDKVVELIPAPTSEFEEDAPARAMIFDSVYDTYRGVVTYIRMMDGKLTPRQKIKMMSTGATHELLEIGIVSPTPKKCVGLGPGEVGYLITGVKDVRQSKVGDTVTWAIHGAEQPLRGYQEPTPMVYSGLFPISQADFPDLRDALEKLQLNDASLTYEPETSVALGFGFRCGFLGLLHMEITRDRLEREFGLDLISTAPSVNYRVIDEAGKEFRVHNPSDWPGGKLSEVYEPIVKVTIIVPSEFVGPTMELCQTKRGQMGGMDYLSEDRVELRYTMPLGEIIFDFFDMLKSRTKGYASLNYEEAGEQTADLVKVDILLQGEPVDAFSAIVHRDNAQWYGNKMTVKLKELIPRQQFEVPVQAAIGSKVIARENIRALRKDVLAKCYGGDISRKRKLLEKQKAGKKRMKNIGSVEVPQEAFVAALSTDEA.

The tr-type G domain maps to 14–200 (ARIRNFCIIA…KVVELIPAPT (187 aa)). GTP contacts are provided by residues 26 to 31 (DHGKST) and 147 to 150 (NKID).

It belongs to the TRAFAC class translation factor GTPase superfamily. Classic translation factor GTPase family. LepA subfamily.

It is found in the cell membrane. The catalysed reaction is GTP + H2O = GDP + phosphate + H(+). Functionally, required for accurate and efficient protein synthesis under certain stress conditions. May act as a fidelity factor of the translation reaction, by catalyzing a one-codon backward translocation of tRNAs on improperly translocated ribosomes. Back-translocation proceeds from a post-translocation (POST) complex to a pre-translocation (PRE) complex, thus giving elongation factor G a second chance to translocate the tRNAs correctly. Binds to ribosomes in a GTP-dependent manner. The protein is Elongation factor 4 of Corynebacterium glutamicum (strain ATCC 13032 / DSM 20300 / JCM 1318 / BCRC 11384 / CCUG 27702 / LMG 3730 / NBRC 12168 / NCIMB 10025 / NRRL B-2784 / 534).